Reading from the N-terminus, the 391-residue chain is UPF0229 protein BCA_0588 (391 aa).

Residues 1-16 show a composition bias toward polar residues; it reads MGEENQPNYTISQENW. 2 disordered regions span residues 1 to 31 and 80 to 117; these read MGEE…RHQE and HVGQ…GDAA. Positions 21-31 are enriched in basic and acidic residues; it reads KGYDDQQRHQE. Gly residues predominate over residues 98–115; it reads GSGGQKQKGPGKGQGAGD.

This sequence belongs to the UPF0229 family.

This Bacillus cereus (strain 03BB102) protein is UPF0229 protein BCA_0588.